The following is a 27-amino-acid chain: uncharacterized protein (27 aa).

The chain crosses the membrane as a helical span at residues 6–26; the sequence is IIVLGALIALLELIRFLLQLL.

It belongs to the DinQ family.

It is found in the cell inner membrane. This is an uncharacterized protein from Escherichia coli (strain K12).